We begin with the raw amino-acid sequence, 133 residues long: Small ribosomal subunit protein uS8 (133 aa).

Belongs to the universal ribosomal protein uS8 family. Part of the 30S ribosomal subunit. Contacts proteins S5 and S12.

Functionally, one of the primary rRNA binding proteins, it binds directly to 16S rRNA central domain where it helps coordinate assembly of the platform of the 30S subunit. The chain is Small ribosomal subunit protein uS8 from Protochlamydia amoebophila (strain UWE25).